A 269-amino-acid chain; its full sequence is Cytochrome c oxidase subunit 3 (269 aa).

7 helical membrane passes run Pro-21–Met-41, Ile-45–Trp-65, Gly-90–Phe-110, Pro-138–Ile-160, Ala-167–Ile-187, Phe-205–Ile-225, and Ile-247–Trp-267.

The protein belongs to the cytochrome c oxidase subunit 3 family. As to quaternary structure, component of the cytochrome c oxidase (complex IV, CIV), a multisubunit enzyme composed of a catalytic core of 3 subunits and several supernumerary subunits. The complex exists as a monomer or a dimer and forms supercomplexes (SCs) in the inner mitochondrial membrane with ubiquinol-cytochrome c oxidoreductase (cytochrome b-c1 complex, complex III, CIII).

It is found in the mitochondrion inner membrane. The enzyme catalyses 4 Fe(II)-[cytochrome c] + O2 + 8 H(+)(in) = 4 Fe(III)-[cytochrome c] + 2 H2O + 4 H(+)(out). In terms of biological role, component of the cytochrome c oxidase, the last enzyme in the mitochondrial electron transport chain which drives oxidative phosphorylation. The respiratory chain contains 3 multisubunit complexes succinate dehydrogenase (complex II, CII), ubiquinol-cytochrome c oxidoreductase (cytochrome b-c1 complex, complex III, CIII) and cytochrome c oxidase (complex IV, CIV), that cooperate to transfer electrons derived from NADH and succinate to molecular oxygen, creating an electrochemical gradient over the inner membrane that drives transmembrane transport and the ATP synthase. Cytochrome c oxidase is the component of the respiratory chain that catalyzes the reduction of oxygen to water. Electrons originating from reduced cytochrome c in the intermembrane space (IMS) are transferred via the dinuclear copper A center (CU(A)) of subunit 2 and heme A of subunit 1 to the active site in subunit 1, a binuclear center (BNC) formed by heme A3 and copper B (CU(B)). The BNC reduces molecular oxygen to 2 water molecules using 4 electrons from cytochrome c in the IMS and 4 protons from the mitochondrial matrix. This Candida glabrata (strain ATCC 2001 / BCRC 20586 / JCM 3761 / NBRC 0622 / NRRL Y-65 / CBS 138) (Yeast) protein is Cytochrome c oxidase subunit 3 (COX3).